A 103-amino-acid polypeptide reads, in one-letter code: Matrix Gla protein (103 aa).

Residues Met1–Cys19 form the signal peptide. At Glu21 the chain carries 4-carboxyglutamate. A phosphoserine mark is found at Ser22, Ser25, and Ser28. Residues Arg51–Arg97 form the Gla domain. Glu56, Glu60, Glu67, and Glu71 each carry 4-carboxyglutamate. A disulfide bridge connects residues Cys73 and Cys79.

It belongs to the osteocalcin/matrix Gla protein family. In terms of processing, requires vitamin K-dependent gamma-carboxylation for its function.

The protein localises to the secreted. Its function is as follows. Associates with the organic matrix of bone and cartilage. Thought to act as an inhibitor of bone formation. In Sus scrofa (Pig), this protein is Matrix Gla protein (MGP).